A 462-amino-acid polypeptide reads, in one-letter code: MSKLWGGRFTEEAEAWVEEFGASISFDKQLVKQDIEGSIAHVMMLAKQGIVTNDEAEKIKEGLQYLLEEAKENKLHFSVEAEDVHLNIEKMLIEQIGEVGGKLHTGRSRNDQVATDMHLYLKEKVQDIINAIKQLQKVLVDQAEENIETIMPGYTHLQRAQPISFAHHILAYFWMLERDVNRYEDSLKRINVSPLGAGALAGTTFPIDRAYSAKLLDFEGIYENSLDAVSDRDFILEFLSNSSMLMMHISRFCEELILWSSQEFQFIEMSDRYATGSSIMPQKKNPDMAELIRGKTGRVYGNLFSLLTVMKGLPLAYNKDLQEDKEGMFDTVKTVEGCLHIMAGMLETMTVNKENMGQAVTQDFSNATEVADYLANKGLPFRQAHEIVGKLVLHCTKKGIYLLDVPLETYKEMSPLFEEDLYEVLSPYAAVKRRNSAGGTGFVQIEQALEKAKILVGEVTRN.

The protein belongs to the lyase 1 family. Argininosuccinate lyase subfamily.

It is found in the cytoplasm. The enzyme catalyses 2-(N(omega)-L-arginino)succinate = fumarate + L-arginine. It participates in amino-acid biosynthesis; L-arginine biosynthesis; L-arginine from L-ornithine and carbamoyl phosphate: step 3/3. In Bacillus cytotoxicus (strain DSM 22905 / CIP 110041 / 391-98 / NVH 391-98), this protein is Argininosuccinate lyase.